The chain runs to 456 residues: tRNA modification GTPase MnmE (456 aa).

(6S)-5-formyl-5,6,7,8-tetrahydrofolate-binding residues include R24, E81, and K120. One can recognise a TrmE-type G domain in the interval 216 to 379 (GMTVVIAGRP…LRDHLKACMG (164 aa)). A K(+)-binding site is contributed by N226. Residues 226 to 231 (NAGKSS), 245 to 251 (TEIAGTT), 270 to 273 (DTAG), and 335 to 338 (NKAD) contribute to the GTP site. Mg(2+) is bound at residue S230. Residues T245, I247, and T250 each coordinate K(+). T251 contributes to the Mg(2+) binding site. K456 lines the (6S)-5-formyl-5,6,7,8-tetrahydrofolate pocket.

It belongs to the TRAFAC class TrmE-Era-EngA-EngB-Septin-like GTPase superfamily. TrmE GTPase family. In terms of assembly, homodimer. Heterotetramer of two MnmE and two MnmG subunits. The cofactor is K(+).

The protein localises to the cytoplasm. Exhibits a very high intrinsic GTPase hydrolysis rate. Involved in the addition of a carboxymethylaminomethyl (cmnm) group at the wobble position (U34) of certain tRNAs, forming tRNA-cmnm(5)s(2)U34. This is tRNA modification GTPase MnmE from Pseudomonas fluorescens (strain Pf0-1).